Consider the following 262-residue polypeptide: DNA-directed RNA polymerase subunit Rpo3 (262 aa).

The protein belongs to the archaeal Rpo3/eukaryotic RPB3 RNA polymerase subunit family. In terms of assembly, part of the RNA polymerase complex.

The protein resides in the cytoplasm. The catalysed reaction is RNA(n) + a ribonucleoside 5'-triphosphate = RNA(n+1) + diphosphate. Its function is as follows. DNA-dependent RNA polymerase (RNAP) catalyzes the transcription of DNA into RNA using the four ribonucleoside triphosphates as substrates. This is DNA-directed RNA polymerase subunit Rpo3 from Pyrobaculum islandicum (strain DSM 4184 / JCM 9189 / GEO3).